The sequence spans 297 residues: Protoheme IX farnesyltransferase (297 aa).

8 helical membrane-spanning segments follow: residues 15 to 35, 39 to 59, 91 to 111, 112 to 132, 139 to 159, 166 to 186, 220 to 240, and 265 to 285; these read VVALILFTAVVGMFLAVPAPY, GLLVLSASIGISMVAASAAVF, VWGVFLGFIGLGILQLFVNII, TVVLTFISLIGYTIVYTLYLK, IVIGGAAGATPPVLGWTAVSG, ACLLFLIVFIWTPPHFWALAI, LLLVSLLPYLSGMSGLIYLVI, and AWSTFMYSINYLMLLFIALLF.

Belongs to the UbiA prenyltransferase family. Protoheme IX farnesyltransferase subfamily.

It is found in the cell inner membrane. The catalysed reaction is heme b + (2E,6E)-farnesyl diphosphate + H2O = Fe(II)-heme o + diphosphate. It participates in porphyrin-containing compound metabolism; heme O biosynthesis; heme O from protoheme: step 1/1. Converts heme B (protoheme IX) to heme O by substitution of the vinyl group on carbon 2 of heme B porphyrin ring with a hydroxyethyl farnesyl side group. This chain is Protoheme IX farnesyltransferase, found in Vesicomyosocius okutanii subsp. Calyptogena okutanii (strain HA).